A 392-amino-acid polypeptide reads, in one-letter code: Antitrypsin (392 aa).

An N-terminal signal peptide occupies residues 1 to 16; it reads MKTIICLFTIAIAAMA.

It belongs to the serpin family. In terms of tissue distribution, hemolymph.

The protein resides in the secreted. May play a role in the prophenoloxidase activating system in the silkworm hemolymph. This chain is Antitrypsin, found in Bombyx mori (Silk moth).